A 306-amino-acid chain; its full sequence is UDP-N-acetylenolpyruvoylglucosamine reductase (306 aa).

Residues 34–199 (KSGGAAEWLF…VAATFRGHAE (166 aa)) enclose the FAD-binding PCMH-type domain. R179 is an active-site residue. The tract at residues 215-234 (REASQPLRSRTGGSTFKNPQ) is disordered. A compositionally biased stretch (polar residues) spans 220-232 (PLRSRTGGSTFKN). The active-site Proton donor is the S228. E298 is an active-site residue.

Belongs to the MurB family. FAD is required as a cofactor.

Its subcellular location is the cytoplasm. The catalysed reaction is UDP-N-acetyl-alpha-D-muramate + NADP(+) = UDP-N-acetyl-3-O-(1-carboxyvinyl)-alpha-D-glucosamine + NADPH + H(+). The protein operates within cell wall biogenesis; peptidoglycan biosynthesis. Cell wall formation. In Rhizorhabdus wittichii (strain DSM 6014 / CCUG 31198 / JCM 15750 / NBRC 105917 / EY 4224 / RW1) (Sphingomonas wittichii), this protein is UDP-N-acetylenolpyruvoylglucosamine reductase.